The primary structure comprises 251 residues: Triosephosphate isomerase (251 aa).

N9 to K11 contacts substrate. The Electrophile role is filled by H95. E167 acts as the Proton acceptor in catalysis. Substrate contacts are provided by residues G173, S213, and G234 to G235. S213 carries the phosphoserine modification.

Belongs to the triosephosphate isomerase family. In terms of assembly, homodimer.

It is found in the cytoplasm. The enzyme catalyses D-glyceraldehyde 3-phosphate = dihydroxyacetone phosphate. Its pathway is carbohydrate biosynthesis; gluconeogenesis. It functions in the pathway carbohydrate degradation; glycolysis; D-glyceraldehyde 3-phosphate from glycerone phosphate: step 1/1. Its function is as follows. Involved in the gluconeogenesis. Catalyzes stereospecifically the conversion of dihydroxyacetone phosphate (DHAP) to D-glyceraldehyde-3-phosphate (G3P). The chain is Triosephosphate isomerase from Bacillus mycoides (strain KBAB4) (Bacillus weihenstephanensis).